The sequence spans 148 residues: Small ribosomal subunit protein eS6 (148 aa).

It belongs to the eukaryotic ribosomal protein eS6 family.

This chain is Small ribosomal subunit protein eS6, found in Pyrobaculum neutrophilum (strain DSM 2338 / JCM 9278 / NBRC 100436 / V24Sta) (Thermoproteus neutrophilus).